The primary structure comprises 126 residues: Histone H2B 1.2 (126 aa).

Residues M1–K12 show a composition bias toward low complexity. Positions M1 to K35 are disordered. 2 positions are modified to N6-acetyllysine: K6 and K13. S15 bears the Phosphoserine mark. An N6-acetyllysine mark is found at K16 and K21. A glycan (O-linked (GlcNAc) serine) is linked at S113. Residue K121 forms a Glycyl lysine isopeptide (Lys-Gly) (interchain with G-Cter in ubiquitin) linkage.

This sequence belongs to the histone H2B family. The nucleosome is a histone octamer containing two molecules each of H2A, H2B, H3 and H4 assembled in one H3-H4 heterotetramer and two H2A-H2B heterodimers. The octamer wraps approximately 147 bp of DNA. In terms of processing, monoubiquitination of Lys-121 by BRE1 gives a specific tag for epigenetic transcriptional activation and is also prerequisite for histone H3 'Lys-4' and 'Lys-79' methylation. Phosphorylated on Ser-15 during developmentally programmed apoptosis; which may facilitate apoptotic chromatin condensation. Post-translationally, glcNAcylation at Ser-113 promotes monoubiquitination of Lys-121. It fluctuates in response to extracellular glucose, and associates with transcribed genes.

The protein localises to the nucleus. The protein resides in the chromosome. Functionally, core component of nucleosome. Nucleosomes wrap and compact DNA into chromatin, limiting DNA accessibility to the cellular machineries which require DNA as a template. Histones thereby play a central role in transcription regulation, DNA repair, DNA replication and chromosomal stability. DNA accessibility is regulated via a complex set of post-translational modifications of histones, also called histone code, and nucleosome remodeling. The chain is Histone H2B 1.2 from Xenopus laevis (African clawed frog).